A 254-amino-acid polypeptide reads, in one-letter code: MGLLRIPLYRLYERRLERALSNAPKPRHVGVILDGNRRWARLSGLSSPKEGHRAGAEKIFELLDWCDEVGVQVVTLWLLSTDNLARPPEELEPLFEIIENTVRRLCNEGRRVNPMGALDLLPASTAQVMKEAGTTTERNPGLLVNVAVGYGGRREIADAVRSLLLEEAAKGTTLEELAERLDLDDIAKHLYTRGQPDPDLLIRTSGEQRLSGFLLWQSAHSEFYFCEVFWPAFRKIDFLRALRSYSVRQRRFGC.

The active site involves Asp-34. Residue Asp-34 participates in Mg(2+) binding. Residues 35-38 (GNRR), Trp-39, His-52, and 80-82 (STD) contribute to the substrate site. Catalysis depends on Asn-83, which acts as the Proton acceptor. Substrate contacts are provided by residues Arg-86, Arg-203, and 209–211 (RLS). Mg(2+) is bound at residue Glu-222.

Belongs to the UPP synthase family. Z-FPP synthase subfamily. Homodimer. Mg(2+) is required as a cofactor.

It catalyses the reaction isopentenyl diphosphate + (2E)-geranyl diphosphate = (2Z,6E)-farnesyl diphosphate + diphosphate. In terms of biological role, catalyzes the condensation of only one isopentenyl pyrophosphate (IPP) unit in the cis configuration to E-geranyl diphosphate (E-GPP) generating the 15 carbon product (2Z,6E)-farnesyl diphosphate (Z-FPP or EZ-FPP). Only geranyl diphosphate (GPP) can be used as isoprenyl acceptor. In Thermobifida fusca (strain YX), this protein is (2Z,6E)-farnesyl diphosphate synthase.